A 2598-amino-acid polypeptide reads, in one-letter code: Partially reducing polyketide synthase men1 (2598 aa).

The 429-residue stretch at 7–435 (SQSIAIVGLS…GSNAHAILDD (429 aa)) folds into the Ketosynthase family 3 (KS3) domain. Residues Cys-181, His-316, and His-358 each act as for beta-ketoacyl synthase activity in the active site. The span at 450-459 (GKSHHHHHQH) shows a compositional bias: basic residues. 2 disordered regions span residues 450–490 (GKSH…NGTT) and 537–557 (AEKQQQQQQQQGGQGGADPEK). The segment covering 474 to 490 (VNGTSEVNGTSGVNGTT) has biased composition (low complexity). The Malonyl-CoA:ACP transacylase (MAT) domain occupies 611-915 (YVFTGQGAQW…RGPVTQILQS (305 aa)). The segment at 1008–1151 (LGLIGAPMPN…GSVAVEFGAL (144 aa)) is N-terminal hotdog fold. Positions 1008-1325 (LGLIGAPMPN…CVEMPSASGM (318 aa)) constitute a PKS/mFAS DH domain. Residues 1009 to 1323 (GLIGAPMPNF…LVCVEMPSAS (315 aa)) are dehydratase (DH) domain. Residues 1169 to 1325 (TISQEVDVFY…CVEMPSASGM (157 aa)) are C-terminal hotdog fold. The Enoyl reductase (ER) domain maps to 1886 to 2197 (GMLNTLCFEI…ARSRQDKIVI (312 aa)). The Ketoreductase (KR) domain occupies 2222-2399 (TYLIAGGLGG…AATIDLGIVK (178 aa)). Residues 2510–2587 (EAARLVSAAV…AFASDLAKKG (78 aa)) enclose the Carrier domain. Ser-2547 bears the O-(pantetheine 4'-phosphoryl)serine mark.

It depends on pantetheine 4'-phosphate as a cofactor.

The protein operates within secondary metabolite biosynthesis. Its function is as follows. Partially reducing polyketide synthase; part of the gene cluster that mediates the biosynthesis of menisporopsin A, a bioactive macrocyclic polylactone. The biosynthesis of menisporopsin A is performed by a reducing (man1) and a non-reducing (men2) polyketide synthase that catalyze the formation of each menisporopsin A subunits, while the esterification and cyclolactonization activities are probably peformed by the unusual thioesterase domain of men2. First, a reduced diketide intermediate, 3-hydroxybutyryl-S-ACP is produced by men1 and transferred to men2; this is followed by a second reduced diketide which is further elongated using 3 units of malonyl-coA to form a reduced pentaketide. The cyclization of this intermediate by the PT domain forms the second subunit, 2,4-dihydroxy-6-(2-hydroxy-n-propyl)benzoyl-S-ACP. The TE domain of men2 then esterifies the secondary hydroxyl group on the side chain of the second subunit with the acyl-TE of the first subunit to form the first ester intermediate. This process occurs iteratively to form a linear tetraester intermediate. The final subunit is formed by a similar process, except that an extra malonyl-CoA is required in an additional elongation step to form a reduced hexaketide intermediate, and the carbonyl group next to the secondary hydroxyl group is reduced by a trans-acting ketoreductase. Again, the PT domain catalyzes cyclization to form the largest subunit, 2,4-dihydroxy-6-(2,4-dihydroxy-n-pentyl) benzoyl-S-ACP. Then the linear pentaester intermediate is formed. In this step, if the intermediate transfer rate is slow, intra- molecular cyclization involving the secondary hydroxyl group of the pentaester intermediate may occur to form menisporopsin B. Alternatively, transfer of the pentaester intermediate to the TE domain would allow cyclolactonization to be catalyzed by the TE to form menisporopsin A. The chain is Partially reducing polyketide synthase men1 from Menisporopsis theobromae.